Consider the following 62-residue polypeptide: Large ribosomal subunit protein bL28 (62 aa).

It belongs to the bacterial ribosomal protein bL28 family.

This is Large ribosomal subunit protein bL28 from Halalkalibacterium halodurans (strain ATCC BAA-125 / DSM 18197 / FERM 7344 / JCM 9153 / C-125) (Bacillus halodurans).